Reading from the N-terminus, the 369-residue chain is Serine/threonine-protein acetyltransferase HopZ1a (369 aa).

Positions 1 to 46 (MGNVCVGGSRMSHQVYSPDRADTPPRSERNTPDRRQRAAGDAERTQ) are disordered. Residues 19-46 (DRADTPPRSERNTPDRRQRAAGDAERTQ) show a composition bias toward basic and acidic residues. Residues R49, K53, and R106 each contribute to the 1D-myo-inositol hexakisphosphate site. Active-site residues include H150 and E170. H150 provides a ligand contact to CoA. Residues A177 and 211-212 (KT) each bind CoA. The active site involves C216. 1D-myo-inositol hexakisphosphate contacts are provided by residues N222, 226–229 (KAHK), and 289–290 (KH). An N6-acetyllysine; by autocatalysis modification is found at K289. Residue 292–295 (ASLT) participates in CoA binding. 1D-myo-inositol hexakisphosphate is bound by residues 314-317 (SEGH) and R326. CoA-binding positions include 331–334 (RVKR) and 344–348 (SNTQF). Residues Q358 and R362 each contribute to the 1D-myo-inositol hexakisphosphate site.

The protein belongs to the acetyltransferase YopJ family. Interacts with host plant JAZ proteins (e.g. Glycine max JAZ1 and Arabidospis thaliana TIFY10B/JAZ2, TIFY11A/JAZ5, TIFY11B/JAZ6, TIFY5A/JAZ8 and TIFY3B/JAZ12) and triggers their degradation. Binds directly to SZE1 and SZE2 at the host plasma membrane; this interaction with a complex made of, at least, SZE1, BKN2/SZE2, ZAR1 and ZED1 triggers host immunity. The cofactor is 1D-myo-inositol hexakisphosphate. Post-translationally, autoacetylated at Lys-289; while autoacetylation at Lys-289 is required for virulence function to some extent, it is not essential.

The protein localises to the secreted. It localises to the host cell membrane. The protein resides in the host cytoplasm. It is found in the host cytoskeleton. Its subcellular location is the host nucleus. It carries out the reaction L-threonyl-[protein] + acetyl-CoA = O-acetyl-L-threonyl-[protein] + CoA. The catalysed reaction is L-seryl-[protein] + acetyl-CoA = O-acetyl-L-seryl-[protein] + CoA. The enzyme catalyses L-lysyl-[protein] + acetyl-CoA = N(6)-acetyl-L-lysyl-[protein] + CoA + H(+). With respect to regulation, 1D-myo-inositol hexakisphosphate activates protein-acetyltransferase activity via an allosteric mechanism: 1D-myo-inositol hexakisphosphate-binding induces a conformational rearrangement that stimulates the interaction with acetyl-CoA. Acetyltransferase activity is activated by phytic acid. Serine/threonine-protein acetyltransferase translocated into infected cells, which impairs host microtubule network and host immunity by mediating acetylation of target proteins. Blocks secretion in host cells by mediating acetylation of host tubulin, thereby impairing host microbubule network. Impairs host cell immunity by mediating acetylation of host TIFY/JAZ transcription repressors (Arabidopsis thaliana TIFY10B/JAZ2, TIFY11A/JAZ5, TIFY11B/JAZ6, TIFY5A/JAZ8, TIFY9/JAZ10 and TIFY3B/JAZ12), thereby activating host jasmonate signaling. This chain is Serine/threonine-protein acetyltransferase HopZ1a, found in Pseudomonas syringae pv. syringae.